Consider the following 242-residue polypeptide: Intraflagellar transport-associated protein (242 aa).

Serine 57 carries the phosphoserine modification.

As to quaternary structure, interacts with IFT122; the interaction associates IFTAP with IFT-A complex.

Seems to play a role in ciliary BBSome localization, maybe through interaction with IFT-A complex. This is Intraflagellar transport-associated protein (IFTAP) from Bos taurus (Bovine).